Here is a 265-residue protein sequence, read N- to C-terminus: Small ribosomal subunit protein uS3 (265 aa).

The KH type-2 domain maps to 39–107; that stretch reads VREFLKKKLK…PVHVNIEEIR (69 aa). The segment at 211–265 is disordered; the sequence is NDAPVVEEPQEDRRRRPGRPEGRRREGEGRPAGNRRGGAGAGRRAAPGADAKSGE. Positions 221 to 239 are enriched in basic and acidic residues; sequence EDRRRRPGRPEGRRREGEG.

The protein belongs to the universal ribosomal protein uS3 family. Part of the 30S ribosomal subunit. Forms a tight complex with proteins S10 and S14.

Its function is as follows. Binds the lower part of the 30S subunit head. Binds mRNA in the 70S ribosome, positioning it for translation. The protein is Small ribosomal subunit protein uS3 of Cupriavidus metallidurans (strain ATCC 43123 / DSM 2839 / NBRC 102507 / CH34) (Ralstonia metallidurans).